The following is a 206-amino-acid chain: FMN-dependent NADH:quinone oxidoreductase (206 aa).

FMN-binding positions include 15-17 (SVS), 94-97 (MYNF), and 138-141 (TRGG).

It belongs to the azoreductase type 1 family. In terms of assembly, homodimer. The cofactor is FMN.

It catalyses the reaction 2 a quinone + NADH + H(+) = 2 a 1,4-benzosemiquinone + NAD(+). The enzyme catalyses N,N-dimethyl-1,4-phenylenediamine + anthranilate + 2 NAD(+) = 2-(4-dimethylaminophenyl)diazenylbenzoate + 2 NADH + 2 H(+). Its function is as follows. Quinone reductase that provides resistance to thiol-specific stress caused by electrophilic quinones. Also exhibits azoreductase activity. Catalyzes the reductive cleavage of the azo bond in aromatic azo compounds to the corresponding amines. This chain is FMN-dependent NADH:quinone oxidoreductase, found in Rhizobium meliloti (strain 1021) (Ensifer meliloti).